Reading from the N-terminus, the 388-residue chain is Alanine racemase (388 aa).

Residue K44 is the Proton acceptor; specific for D-alanine of the active site. The residue at position 44 (K44) is an N6-(pyridoxal phosphate)lysine. R142 is a binding site for substrate. Catalysis depends on Y273, which acts as the Proton acceptor; specific for L-alanine. Position 321 (M321) interacts with substrate.

It belongs to the alanine racemase family. Requires pyridoxal 5'-phosphate as cofactor.

It carries out the reaction L-alanine = D-alanine. Its pathway is amino-acid biosynthesis; D-alanine biosynthesis; D-alanine from L-alanine: step 1/1. Functionally, catalyzes the interconversion of L-alanine and D-alanine. May also act on other amino acids. In Mycobacterium ulcerans (strain Agy99), this protein is Alanine racemase (alr).